We begin with the raw amino-acid sequence, 1502 residues long: E3 ubiquitin-protein ligase UPL4 (1502 aa).

Basic and acidic residues predominate over residues 1–21 (MENRGQKRMEVVEELPADKRA). The segment at 1 to 107 (MENRGQKRME…DYQRQRSSGD (107 aa)) is disordered. Residues 22–46 (CNSQDFRPSTSGSSVQAQANDTNPG) are compositionally biased toward polar residues. The span at 67 to 90 (DEEEQEEQDKEDSDYGSCDSDEED) shows a compositional bias: acidic residues. Residues 91–107 (PRQRVLQDYQRQRSSGD) are compositionally biased toward basic and acidic residues. ARM repeat units follow at residues 143–183 (EESL…YLCD), 186–226 (PPSV…KISR), 228–265 (EPVA…NICK), and 267–306 (LSSE…KIAD). Positions 833 to 881 (CQAESSSPMEIDSESSDASQLQGSQVEDQTQLPGQQNASSSETSSEKED) are disordered. Residues 849–875 (DASQLQGSQVEDQTQLPGQQNASSSET) are compositionally biased toward polar residues. Positions 1022 to 1096 (RPVPHSEFVS…IRHHPQHLSS (75 aa)) are K-box. The region spanning 1128 to 1502 (KMMELYGNQK…TEGQGSFHLS (375 aa)) is the HECT domain. Cysteine 1469 serves as the catalytic Glycyl thioester intermediate.

Belongs to the UPL family. K-HECT subfamily.

It carries out the reaction S-ubiquitinyl-[E2 ubiquitin-conjugating enzyme]-L-cysteine + [acceptor protein]-L-lysine = [E2 ubiquitin-conjugating enzyme]-L-cysteine + N(6)-ubiquitinyl-[acceptor protein]-L-lysine.. It participates in protein modification; protein ubiquitination. Probable E3 ubiquitin-protein ligase which mediates ubiquitination and subsequent proteasomal degradation of target proteins. In Arabidopsis thaliana (Mouse-ear cress), this protein is E3 ubiquitin-protein ligase UPL4 (UPL4).